Reading from the N-terminus, the 183-residue chain is Ribosome maturation factor RimM (183 aa).

One can recognise a PRC barrel domain in the interval 104-183; it reads EGDYYWKDLI…TIEVDWDPGF (80 aa).

This sequence belongs to the RimM family. Binds ribosomal protein uS19.

The protein localises to the cytoplasm. In terms of biological role, an accessory protein needed during the final step in the assembly of 30S ribosomal subunit, possibly for assembly of the head region. Essential for efficient processing of 16S rRNA. May be needed both before and after RbfA during the maturation of 16S rRNA. It has affinity for free ribosomal 30S subunits but not for 70S ribosomes. This Cronobacter sakazakii (strain ATCC BAA-894) (Enterobacter sakazakii) protein is Ribosome maturation factor RimM.